An 842-amino-acid polypeptide reads, in one-letter code: Translation initiation factor IF-2 (842 aa).

Disordered regions lie at residues 42 to 91 (ETKR…NLSS) and 139 to 253 (LQKQ…NQEP). Basic and acidic residues-rich tracts occupy residues 176–190 (IEKRKIDENQEEERH) and 199–214 (SEIRAPKIVKGADERR). The 170-residue stretch at 340–509 (PRPPVVTIMG…LLQAEMLDLK (170 aa)) folds into the tr-type G domain. Residues 349-356 (GHVDHGKT) are G1. 349-356 (GHVDHGKT) contributes to the GTP binding site. The G2 stretch occupies residues 374 to 378 (GITQH). Residues 395–398 (DTPG) form a G3 region. Residues 395–399 (DTPGH) and 449–452 (NKID) each bind GTP. The segment at 449-452 (NKID) is G4. The interval 485 to 487 (SAK) is G5.

This sequence belongs to the TRAFAC class translation factor GTPase superfamily. Classic translation factor GTPase family. IF-2 subfamily.

The protein localises to the cytoplasm. Functionally, one of the essential components for the initiation of protein synthesis. Protects formylmethionyl-tRNA from spontaneous hydrolysis and promotes its binding to the 30S ribosomal subunits. Also involved in the hydrolysis of GTP during the formation of the 70S ribosomal complex. The sequence is that of Translation initiation factor IF-2 from Bartonella tribocorum (strain CIP 105476 / IBS 506).